Reading from the N-terminus, the 248-residue chain is Probable transcriptional regulatory protein MYPE8020 (248 aa).

The protein belongs to the TACO1 family.

It localises to the cytoplasm. This chain is Probable transcriptional regulatory protein MYPE8020, found in Malacoplasma penetrans (strain HF-2) (Mycoplasma penetrans).